A 201-amino-acid chain; its full sequence is UPF0301 protein R00917 (201 aa).

This sequence belongs to the UPF0301 (AlgH) family.

The sequence is that of UPF0301 protein R00917 from Rhizobium meliloti (strain 1021) (Ensifer meliloti).